Reading from the N-terminus, the 356-residue chain is tRNA pseudouridine synthase D (356 aa).

Asp-84 functions as the Nucleophile in the catalytic mechanism. In terms of domain architecture, TRUD spans 159–302; it reads GVPNYYGPQR…RRGARRPIRV (144 aa).

Belongs to the pseudouridine synthase TruD family.

The enzyme catalyses uridine(13) in tRNA = pseudouridine(13) in tRNA. In terms of biological role, responsible for synthesis of pseudouridine from uracil-13 in transfer RNAs. This Thermus thermophilus (strain ATCC BAA-163 / DSM 7039 / HB27) protein is tRNA pseudouridine synthase D.